The following is a 59-amino-acid chain: Large ribosomal subunit protein uL30 (59 aa).

Belongs to the universal ribosomal protein uL30 family. As to quaternary structure, part of the 50S ribosomal subunit.

The chain is Large ribosomal subunit protein uL30 from Enterococcus faecalis (strain ATCC 700802 / V583).